The chain runs to 490 residues: MDDLSEFFVIEEMFISEPSVAGMKPSTSKTTHSPPPEEPTAPFVNDNLPNPEDEPTIGDLNAFHSGEELHRQRSELARANYEKARPEMIANQRAVTAHLFNRYTEDEERKRVEQQKNKEAMNASTSAPTSSRNGGQSVENRKRRNDVVVAPPTSEEEWKRAQQQHWMGQQQPQMQFQMQQQYHSQQQQYIMMQQQHHHMTGMQQIHHQMPSTSSADSIRSVPTPASSMHQPSPAEMRNGCGMSRNATMDMTCSPMSGGQPIVDENNLAVPEGEWFDKLALAVAEQYNVDTILGPDTYDTFLAELDFSSSESPTKQSPMEMNGDRMPSTAPPPAQNPQHIAQLQQQQNKMRLMQQQQQEMQRIEQQRRQQIMQQQQQQQQQEHQRQQMLLQQQQQQQQMQQHHQMNGGGQFATQAHQQAAYMQQMQRMEQIRHQQQQAQQHQQAQQQHQQQAQHHQMGYGIPNGYPQQMHMHPPAYGAHHMPQPTAFANIN.

Disordered regions lie at residues 18-55, 105-155, 213-235, 307-362, and 391-490; these read PSVA…EDEP, EDEE…PTSE, SSAD…SPAE, SSSE…MQRI, and QQQQ…ANIN. The span at 105-119 shows a compositional bias: basic and acidic residues; that stretch reads EDEERKRVEQQKNKE. Positions 122–138 are enriched in polar residues; the sequence is NASTSAPTSSRNGGQSV. Positions 307–318 are enriched in polar residues; it reads SSSESPTKQSPM. Low complexity-rich tracts occupy residues 341–359, 391–404, and 413–456; these read QLQQ…QQEM, QQQQ…HHQM, and QAHQ…HHQM.

In terms of assembly, component of a complex consisting of at least a lin-12/Notch intracellular domain (NICD), lag-1, and lag-3. Interacts with a NICD of lin-12/Notch or glp-1/Notch; the interactions are direct. As to expression, expressed in the progenitor zone and the early pachytene region of the hermaphrodite gonad.

Its subcellular location is the nucleus. Its function is as follows. glp-1/Notch and lin-12/Notch proteins promote signaling by recruiting lag-3 to target promoters, where it functions as a transcriptional activator, probably as part of a complex with a Notch intracellular domain (NICD) and the transcription regulator lag-1. Involved in the p53-mediated germ-cell apoptotic response to DNA damage, perhaps acting as a transcriptional activator. May regulate phosphatase lip-1 mRNA transcription downstream of glp-1. The polypeptide is Protein lag-3 (sel-8) (Caenorhabditis elegans).